A 465-amino-acid chain; its full sequence is Deoxyguanosinetriphosphate triphosphohydrolase-like protein (465 aa).

Residues 1 to 22 (MKWDKLLNDKRRRESGVTRSKN) form a disordered region. Positions 63-252 (RLTHSMEVST…LEVADDIAYL (190 aa)) constitute an HD domain.

It belongs to the dGTPase family. Type 3 subfamily.

The chain is Deoxyguanosinetriphosphate triphosphohydrolase-like protein from Listeria monocytogenes serovar 1/2a (strain ATCC BAA-679 / EGD-e).